The chain runs to 196 residues: NADH dehydrogenase [ubiquinone] 1 alpha subcomplex assembly factor 3 (196 aa).

Residues 1-93 constitute a mitochondrion transit peptide; the sequence is MIARTLRTVG…RSVLSWNVNS (93 aa).

It belongs to the NDUFAF3 family. In terms of assembly, together with NdufAF4 associates with mitochondrial complex I assembly intermediates during its biogenesis.

The protein localises to the mitochondrion. In terms of biological role, involved in the assembly of mitochondrial NADH:ubiquinone oxidoreductase complex (complex I). Together with NdufAF4, involved in biogenesis of complex 1 modules N, Q and P-peripheral, but not the P-distal module. Required for recruitment of the complex I assembly factor Timmdc1 to complex 1 assembly intermediates. The sequence is that of NADH dehydrogenase [ubiquinone] 1 alpha subcomplex assembly factor 3 from Drosophila melanogaster (Fruit fly).